We begin with the raw amino-acid sequence, 108 residues long: MKSLLFTLAVFMLLAQLVSGNWYVKKCLNDVGICKKKCKPGEMHIKNGWATCGKQRDCCVPADRRANYPAFCVQTKTTRTSTVTAKTTLMVTTASMSSMAPTPVSPTG.

The signal sequence occupies residues 1 to 20 (MKSLLFTLAVFMLLAQLVSG). The segment at 21-63 (NWYVKKCLNDVGICKKKCKPGEMHIKNGWATCGKQRDCCVPAD) is in vitro binds to LPS, mediates antimicrobial activity and inhibits LPS-mediated inflammation. 3 disulfides stabilise this stretch: C27–C58, C34–C52, and C38–C59.

The protein belongs to the beta-defensin family. In terms of assembly, homodimer or homooligomer; disulfide-linked. Post-translationally, O-glycosylated; glycans contain alpha(2,3)-linked sialic acids.

It is found in the secreted. Its function is as follows. Highly glycosylated atypical beta-defensin involved in several aspects of sperm function. Facilitates sperm transport in the female reproductive tract and contributes to sperm protection against immunodetection; both functions are probably implicating the negative surface charge provided by its O-linked oligosaccharides in the sperm glycocalyx. Involved in binding of sperm to oviductal epithelial cells to form a sperm reservoir until ovulation. Release from the sperm surface during capacitation and ovaluation by an elevation of oviductal fluid pH is unmasking other surface components and allows sperm to penetrate the cumulus matrix and bind to the zona pellucida of the oocyte. In vitro has antimicrobial activity and may inhibit LPS-mediated inflammation. This Pan troglodytes (Chimpanzee) protein is Beta-defensin 126 (DEFB126).